Here is a 222-residue protein sequence, read N- to C-terminus: Ribose-5-phosphate isomerase A (222 aa).

Residues threonine 28–threonine 31, aspartate 81–aspartate 84, and lysine 94–glycine 97 each bind substrate. The Proton acceptor role is filled by glutamate 103. Substrate is bound at residue lysine 121.

This sequence belongs to the ribose 5-phosphate isomerase family. As to quaternary structure, homodimer.

The catalysed reaction is aldehydo-D-ribose 5-phosphate = D-ribulose 5-phosphate. The protein operates within carbohydrate degradation; pentose phosphate pathway; D-ribose 5-phosphate from D-ribulose 5-phosphate (non-oxidative stage): step 1/1. Functionally, catalyzes the reversible conversion of ribose-5-phosphate to ribulose 5-phosphate. This chain is Ribose-5-phosphate isomerase A, found in Azoarcus sp. (strain BH72).